The primary structure comprises 150 residues: Large ribosomal subunit protein bL9 (150 aa).

It belongs to the bacterial ribosomal protein bL9 family.

Its function is as follows. Binds to the 23S rRNA. The sequence is that of Large ribosomal subunit protein bL9 from Burkholderia pseudomallei (strain 668).